A 398-amino-acid polypeptide reads, in one-letter code: Na(+)/H(+) antiporter NhaA (398 aa).

Helical transmembrane passes span 21–41, 66–86, 101–121, 132–152, 161–181, 184–204, 216–236, 274–294, 305–325, 343–363, and 374–394; these read LGGY…NSPL, VLHW…GLEI, IVLP…VYLL, GWAI…ALLG, IFLT…IAVF, AELN…LCVL, LLVG…ATLA, LLIV…GMGI, IALG…WLAI, GVAL…ALAF, and IGVL…LRVL.

Belongs to the NhaA Na(+)/H(+) (TC 2.A.33) antiporter family.

The protein resides in the cell inner membrane. The catalysed reaction is Na(+)(in) + 2 H(+)(out) = Na(+)(out) + 2 H(+)(in). In terms of biological role, na(+)/H(+) antiporter that extrudes sodium in exchange for external protons. The sequence is that of Na(+)/H(+) antiporter NhaA from Bordetella bronchiseptica (strain ATCC BAA-588 / NCTC 13252 / RB50) (Alcaligenes bronchisepticus).